Consider the following 248-residue polypeptide: Probable transcriptional regulatory protein FTM_1203 (248 aa).

Belongs to the TACO1 family.

The protein resides in the cytoplasm. The sequence is that of Probable transcriptional regulatory protein FTM_1203 from Francisella tularensis subsp. mediasiatica (strain FSC147).